Here is a 293-residue protein sequence, read N- to C-terminus: 4-hydroxy-tetrahydrodipicolinate synthase (293 aa).

Threonine 44 lines the pyruvate pocket. Tyrosine 132 functions as the Proton donor/acceptor in the catalytic mechanism. Lysine 160 serves as the catalytic Schiff-base intermediate with substrate. Isoleucine 202 contributes to the pyruvate binding site.

The protein belongs to the DapA family. As to quaternary structure, homotetramer; dimer of dimers.

The protein localises to the cytoplasm. The enzyme catalyses L-aspartate 4-semialdehyde + pyruvate = (2S,4S)-4-hydroxy-2,3,4,5-tetrahydrodipicolinate + H2O + H(+). It functions in the pathway amino-acid biosynthesis; L-lysine biosynthesis via DAP pathway; (S)-tetrahydrodipicolinate from L-aspartate: step 3/4. In terms of biological role, catalyzes the condensation of (S)-aspartate-beta-semialdehyde [(S)-ASA] and pyruvate to 4-hydroxy-tetrahydrodipicolinate (HTPA). This is 4-hydroxy-tetrahydrodipicolinate synthase from Pelagibacter ubique (strain HTCC1062).